Here is a 448-residue protein sequence, read N- to C-terminus: Adenylosuccinate synthetase (448 aa).

Residues 36–42 and 64–66 contribute to the GTP site; these read GDEGKGK and GHT. The active-site Proton acceptor is D37. 2 residues coordinate Mg(2+): D37 and G64. Residues 37–40, 62–65, T154, R168, N246, T261, and R325 each bind IMP; these read DEGK and NAGH. H65 acts as the Proton donor in catalysis. 321-327 lines the substrate pocket; sequence VTTKRKR. GTP is bound by residues R327, 353-355, and 436-438; these read KLD and GVG.

It belongs to the adenylosuccinate synthetase family. As to quaternary structure, homodimer. Mg(2+) serves as cofactor.

It localises to the cytoplasm. It catalyses the reaction IMP + L-aspartate + GTP = N(6)-(1,2-dicarboxyethyl)-AMP + GDP + phosphate + 2 H(+). Its pathway is purine metabolism; AMP biosynthesis via de novo pathway; AMP from IMP: step 1/2. In terms of biological role, plays an important role in the de novo pathway and in the salvage pathway of purine nucleotide biosynthesis. Catalyzes the first committed step in the biosynthesis of AMP from IMP. The polypeptide is Adenylosuccinate synthetase (Drosophila ananassae (Fruit fly)).